The following is a 669-amino-acid chain: Elongation factor G-like protein (669 aa).

Residues 7 to 279 (ESLRNVAIVG…VLIKEAPDPS (273 aa)) enclose the tr-type G domain. A G1 region spans residues 16-23 (GPYGSGKT). Residue 16–23 (GPYGSGKT) coordinates GTP. The interval 59-63 (QMSVE) is G2. Residues 80-83 (DCPG) form a G3 region. GTP-binding positions include 80-84 (DCPGS) and 134-137 (NKMD). The interval 134–137 (NKMD) is G4. Residues 257–259 (AAE) are G5.

Belongs to the TRAFAC class translation factor GTPase superfamily. Classic translation factor GTPase family. EF-G/EF-2 subfamily.

The polypeptide is Elongation factor G-like protein (Synechocystis sp. (strain ATCC 27184 / PCC 6803 / Kazusa)).